The following is an 821-amino-acid chain: DNA replication licensing factor MCM6 (821 aa).

Met-1 carries the N-acetylmethionine modification. Residues Ser-13, Ser-219, and Ser-271 each carry the phosphoserine modification. Thr-278 is subject to Phosphothreonine. The region spanning Leu-346–Val-553 is the MCM domain. ATP-binding residues include His-359, Ser-399, Thr-400, Ala-401, Lys-402, Ser-403, and Asn-504. The short motif at Ser-528 to Asp-531 is the Arginine finger element. ADP-binding residues include Arg-619 and Glu-622. Lys-643 is subject to N6-acetyllysine. Residues Thr-676 to Val-708 form a disordered region. Phosphoserine is present on residues Ser-689, Ser-704, and Ser-762. Polar residues predominate over residues Phe-696–Val-708. Position 791 is a phosphothreonine (Thr-791).

This sequence belongs to the MCM family. In terms of assembly, component of the MCM2-7 complex. The complex forms a toroidal hexameric ring with the proposed subunit order MCM2-MCM6-MCM4-MCM7-MCM3-MCM5. Component of the CMG helicase complex, a hexameric ring of related MCM2-7 subunits stabilized by CDC45 and the tetrameric GINS complex. May interact with MCM10. Interacts with TIPIN. Interacts with CDT1. Interacts with MCMBP. Interacts with DDI2. In terms of processing, O-glycosylated (O-GlcNAcylated), in a cell cycle-dependent manner.

It localises to the nucleus. The protein localises to the chromosome. It carries out the reaction ATP + H2O = ADP + phosphate + H(+). In terms of biological role, acts as a component of the MCM2-7 complex (MCM complex) which is the replicative helicase essential for 'once per cell cycle' DNA replication initiation and elongation in eukaryotic cells. Core component of CDC45-MCM-GINS (CMG) helicase, the molecular machine that unwinds template DNA during replication, and around which the replisome is built. The active ATPase sites in the MCM2-7 ring are formed through the interaction surfaces of two neighboring subunits such that a critical structure of a conserved arginine finger motif is provided in trans relative to the ATP-binding site of the Walker A box of the adjacent subunit. The six ATPase active sites, however, are likely to contribute differentially to the complex helicase activity. In Mus musculus (Mouse), this protein is DNA replication licensing factor MCM6 (Mcm6).